The sequence spans 168 residues: 2-C-methyl-D-erythritol 2,4-cyclodiphosphate synthase (168 aa).

A divalent metal cation is bound by residues aspartate 11 and histidine 13. 4-CDP-2-C-methyl-D-erythritol 2-phosphate is bound by residues 11 to 13 (DVH) and 38 to 39 (HS). Position 46 (histidine 46) interacts with a divalent metal cation. Residues 60-62 (DIG), 133-136 (TTTD), phenylalanine 140, and arginine 143 contribute to the 4-CDP-2-C-methyl-D-erythritol 2-phosphate site.

Belongs to the IspF family. In terms of assembly, homotrimer. Requires a divalent metal cation as cofactor.

It catalyses the reaction 4-CDP-2-C-methyl-D-erythritol 2-phosphate = 2-C-methyl-D-erythritol 2,4-cyclic diphosphate + CMP. It participates in isoprenoid biosynthesis; isopentenyl diphosphate biosynthesis via DXP pathway; isopentenyl diphosphate from 1-deoxy-D-xylulose 5-phosphate: step 4/6. Involved in the biosynthesis of isopentenyl diphosphate (IPP) and dimethylallyl diphosphate (DMAPP), two major building blocks of isoprenoid compounds. Catalyzes the conversion of 4-diphosphocytidyl-2-C-methyl-D-erythritol 2-phosphate (CDP-ME2P) to 2-C-methyl-D-erythritol 2,4-cyclodiphosphate (ME-CPP) with a corresponding release of cytidine 5-monophosphate (CMP). This chain is 2-C-methyl-D-erythritol 2,4-cyclodiphosphate synthase, found in Cutibacterium acnes (strain DSM 16379 / KPA171202) (Propionibacterium acnes).